The following is a 390-amino-acid chain: ATP phosphoribosyltransferase regulatory subunit (390 aa).

It belongs to the class-II aminoacyl-tRNA synthetase family. HisZ subfamily. In terms of assembly, heteromultimer composed of HisG and HisZ subunits.

Its subcellular location is the cytoplasm. It functions in the pathway amino-acid biosynthesis; L-histidine biosynthesis; L-histidine from 5-phospho-alpha-D-ribose 1-diphosphate: step 1/9. In terms of biological role, required for the first step of histidine biosynthesis. May allow the feedback regulation of ATP phosphoribosyltransferase activity by histidine. This is ATP phosphoribosyltransferase regulatory subunit from Nitrosomonas eutropha (strain DSM 101675 / C91 / Nm57).